The sequence spans 317 residues: Ribonuclease Z (317 aa).

Zn(2+)-binding residues include H62, H64, D66, H67, H139, D210, and H268. The active-site Proton acceptor is the D66.

The protein belongs to the RNase Z family. Homodimer. The cofactor is Zn(2+).

It catalyses the reaction Endonucleolytic cleavage of RNA, removing extra 3' nucleotides from tRNA precursor, generating 3' termini of tRNAs. A 3'-hydroxy group is left at the tRNA terminus and a 5'-phosphoryl group is left at the trailer molecule.. Functionally, zinc phosphodiesterase, which displays some tRNA 3'-processing endonuclease activity. Probably involved in tRNA maturation, by removing a 3'-trailer from precursor tRNA. This Picosynechococcus sp. (strain ATCC 27264 / PCC 7002 / PR-6) (Agmenellum quadruplicatum) protein is Ribonuclease Z.